Reading from the N-terminus, the 206-residue chain is Sclerostin domain-containing protein 1 (206 aa).

The N-terminal stretch at 1–23 (MLPPAIHLSLIPLLCILMKNCLA) is a signal peptide. The tract at residues 42-62 (AHPSSNSTLNQARNGGRHFSS) is disordered. The span at 43–62 (HPSSNSTLNQARNGGRHFSS) shows a compositional bias: polar residues. N-linked (GlcNAc...) asparagine glycosylation is present at Asn-47. Cystine bridges form between Cys-75-Cys-133, Cys-89-Cys-147, Cys-100-Cys-163, and Cys-104-Cys-165. The 96-residue stretch at 75-170 (CRELRSTKYI…TACKCKRYTR (96 aa)) folds into the CTCK domain. A glycan (N-linked (GlcNAc...) asparagine) is linked at Asn-173. Positions 176-206 (SHNFESVSPAKPAQHHRERKRASKSSKHSLS) are disordered. Residues 188–206 (AQHHRERKRASKSSKHSLS) show a composition bias toward basic residues.

This sequence belongs to the sclerostin family. Interacts with BMP2, BMP4, BMP6 and BMP7 with high affinity. In terms of tissue distribution, highly expressed within the maximally sensitized/receptive endometrium. Weakly expressed in brain, kidney and the female reproductive tract. Expressed in the dermal papilla (DP) and at high level in the precortex of both anagen vibrissae and pelage follicles. Dynymic expression during the hair cycle.

Its subcellular location is the secreted. Functionally, directly antagonizes activity of BMP2, BMP4, BMP6 and BMP7 in a dose-dependent manner. May be involved in the onset of endometrial receptivity for implantation/sensitization for the decidual cell reaction. Enhances Wnt signaling and inhibits TGF-beta signaling. This chain is Sclerostin domain-containing protein 1 (Sostdc1), found in Rattus norvegicus (Rat).